A 704-amino-acid polypeptide reads, in one-letter code: Glycogen [starch] synthase, liver (704 aa).

Phosphoserine is present on residues serine 8 and serine 11. Residue lysine 40 participates in UDP binding. Positions 205 and 211 each coordinate UDP-alpha-D-glucose. The alpha-D-glucose 6-phosphate site is built by histidine 291, glutamate 292, glutamine 294, histidine 297, and lysine 301. Residue arginine 331 coordinates UDP. UDP-alpha-D-glucose is bound at residue arginine 331. Residue histidine 501 coordinates alpha-D-glucose 6-phosphate. Residues glutamate 510, tryptophan 512, and glycine 513 each contribute to the UDP-alpha-D-glucose site. Residue threonine 515 participates in UDP binding. 2 residues coordinate alpha-D-glucose 6-phosphate: arginine 582 and arginine 586. The interval 620–704 (KFHLEPTSPP…KKKLHGEYKN (85 aa)) is disordered. Serine 627 is subject to Phosphoserine. Phosphoserine; by GSK3-alpha and GSK3-beta is present on residues serine 641, serine 645, serine 649, and serine 653. Low complexity predominate over residues 647–657 (SGSQTSSPQSS). At serine 657 the chain carries Phosphoserine; by CK2. A compositionally biased stretch (acidic residues) spans 659–675 (VENEGDEDERYDEEEEA). A Phosphoserine modification is found at serine 684.

This sequence belongs to the glycosyltransferase 3 family. In terms of assembly, part of the glycogen synthase (GS)-glycogenin complex, a heterooctamer composed of a tetramer of GS and 2 dimers of glycogenin, where each GS protomer binds to one glycogenin subunit (via glycogenin C-terminus); the GS tetramer may dissociate from glycogenin dimers to continue glycogen polymerization on its own. May also form a heterooctamer complex with GYG1 (via GYG1 C-terminus). Post-translationally, primed phosphorylation at Ser-657 (site 5) by CSNK2A1 and CSNK2A2 is required for inhibitory phosphorylation at Ser-641 (site 3a), Ser-645 (site 3b), Ser-649 (site 3c) and Ser-653 (site 4) by GSK3A an GSK3B. Dephosphorylation at Ser-641 and Ser-645 by PP1 activates the enzyme. Phosphorylation at Ser-8 is not required for interaction with GYG1. Interaction with GYG1 does not regulate the phosphorylation at Ser-8 and Ser-641. In terms of tissue distribution, specifically expressed in liver (at protein level).

The enzyme catalyses [(1-&gt;4)-alpha-D-glucosyl](n) + UDP-alpha-D-glucose = [(1-&gt;4)-alpha-D-glucosyl](n+1) + UDP + H(+). Its pathway is glycan biosynthesis; glycogen biosynthesis. With respect to regulation, allosteric activation by glucose-6-phosphate. Phosphorylation reduces the activity towards UDP-glucose. When in the non-phosphorylated state, glycogen synthase does not require glucose-6-phosphate as an allosteric activator; when phosphorylated it does. In terms of biological role, glycogen synthase participates in the glycogen biosynthetic process along with glycogenin and glycogen branching enzyme. Extends the primer composed of a few glucose units formed by glycogenin by adding new glucose units to it. In this context, glycogen synthase transfers the glycosyl residue from UDP-Glc to the non-reducing end of alpha-1,4-glucan. In Rattus norvegicus (Rat), this protein is Glycogen [starch] synthase, liver.